A 438-amino-acid polypeptide reads, in one-letter code: Coenzyme A disulfide reductase (438 aa).

8 to 33 contacts FAD; the sequence is GAVAGGATCASQIRRLDKESEIIVFE. The substrate site is built by Thr15, Gln19, Arg22, Ser39, and Asn42. Cys43 acts as the Nucleophile in catalysis. Catalysis depends on Cys43, which acts as the Redox-active. Lys71 is a substrate binding site. 151-166 contributes to the NADP(+) binding site; that stretch reads ALVVGAGYISLEVLEN. 267-277 is an FAD binding site; sequence TNIPNIYALGD. His299 provides a ligand contact to substrate. Tyr419 is an FAD binding site. Lys427 serves as a coordination point for substrate.

It belongs to the class-III pyridine nucleotide-disulfide oxidoreductase family. Homodimer. The cofactor is FAD.

The enzyme catalyses NADP(+) + 2 CoA = CoA-disulfide + NADPH + H(+). Catalyzes specifically the NADPH-dependent reduction of coenzyme A disulfide. The protein is Coenzyme A disulfide reductase of Staphylococcus epidermidis (strain ATCC 35984 / DSM 28319 / BCRC 17069 / CCUG 31568 / BM 3577 / RP62A).